A 549-amino-acid chain; its full sequence is Cation/acetate symporter ActP (549 aa).

Helical transmembrane passes span 33-53, 77-97, 103-123, 148-168, 183-203, 206-226, 262-282, 303-323, 355-375, 404-424, 428-448, 464-484, and 493-513; these read WQAIIMFLIFVVFTLGITYWA, LAIAGDYMSAASFLGISALVF, GLIYSLGFLVGWPIILFLIAE, ILSACGSLVVVALYLIAQMVG, IAVVLVGVLMMMYVLFGGMLA, WVQIIKAVLLLFGASFMAFMV, ISALSLGLGLMFGTAGLPHIL, GFMGYFYILTFIIGFGAIMLV, LFLGFISAVAFATILAVVAGL, VSKITVLILGVIAIILGVLFE, IAFMVGLAFAIAASCNFPIIL, GGWLGLITAVVLMILGPTIWV, and IFPYEYPALFSISVAFLGIWL.

The protein belongs to the sodium:solute symporter (SSF) (TC 2.A.21) family.

Its subcellular location is the cell inner membrane. Functionally, transports acetate. The chain is Cation/acetate symporter ActP from Escherichia coli O1:K1 / APEC.